The following is a 308-amino-acid chain: 1D-myo-inositol 2-acetamido-2-deoxy-alpha-D-glucopyranoside deacetylase (308 aa).

Residues His-37, Asp-40, and His-171 each contribute to the Zn(2+) site.

Belongs to the MshB deacetylase family. Zn(2+) is required as a cofactor.

It catalyses the reaction 1D-myo-inositol 2-acetamido-2-deoxy-alpha-D-glucopyranoside + H2O = 1D-myo-inositol 2-amino-2-deoxy-alpha-D-glucopyranoside + acetate. In terms of biological role, catalyzes the deacetylation of 1D-myo-inositol 2-acetamido-2-deoxy-alpha-D-glucopyranoside (GlcNAc-Ins) in the mycothiol biosynthesis pathway. The protein is 1D-myo-inositol 2-acetamido-2-deoxy-alpha-D-glucopyranoside deacetylase of Mycobacterium sp. (strain JLS).